Consider the following 373-residue polypeptide: Peroxisomal biogenesis factor 3 (373 aa).

Topologically, residues 1–15 are cytoplasmic; sequence MFRSTWNFLKRHKKK. Residues 1 to 45 form a targeting to peroxisomes region; sequence MFRSTWNFLKRHKKKCIFLGTVLGGVYILGKYGQKKIREIQEREA. The helical transmembrane segment at 16–36 threads the bilayer; the sequence is CIFLGTVLGGVYILGKYGQKK. The Peroxisomal segment spans residues 37–116; it reads IREIQEREAA…LKIISFTRSI (80 aa). Residues 117–140 form a helical membrane-spanning segment; the sequence is VAVYSTCMLVVLLRVQLNIIGGYI. The tract at residues 120–136 is interaction with PEX19; sequence YSTCMLVVLLRVQLNII. Topologically, residues 141-373 are cytoplasmic; it reads YLDNAAVGKN…AFSTPQQLEK (233 aa).

Belongs to the peroxin-3 family. Interacts with PEX19.

The protein localises to the peroxisome membrane. Its function is as follows. Involved in peroxisome biosynthesis and integrity. Assembles membrane vesicles before the matrix proteins are translocated. As a docking factor for PEX19, is necessary for the import of peroxisomal membrane proteins in the peroxisomes. This is Peroxisomal biogenesis factor 3 (PEX3) from Bos taurus (Bovine).